The following is a 151-amino-acid chain: Large ribosomal subunit protein bL9 (151 aa).

It belongs to the bacterial ribosomal protein bL9 family.

In terms of biological role, binds to the 23S rRNA. The sequence is that of Large ribosomal subunit protein bL9 from Bordetella bronchiseptica (strain ATCC BAA-588 / NCTC 13252 / RB50) (Alcaligenes bronchisepticus).